The following is a 171-amino-acid chain: Myosin regulatory light chain 12B (171 aa).

At Thr18 the chain carries Phosphothreonine; by MLCK and ZIPK/DAPK3. Residue Ser19 is modified to Phosphoserine; by MLCK and ZIPK/DAPK3. EF-hand domains follow at residues 28 to 63, 97 to 132, and 133 to 168; these read SQIQ…LGKN, DPED…MGDR, and FTDE…GAKD. Positions 41, 43, 45, and 52 each coordinate Ca(2+).

Myosin is a hexamer of 2 heavy chains and 4 light chains: interacts with myosin heavy chain MYO19. In terms of processing, phosphorylation increases the actin-activated myosin ATPase activity and thereby regulates the contractile activity. It is required to generate the driving force in the migration of the cells but not necessary for localization of myosin-2 at the leading edge. Phosphorylation is reduced following epigallocatechin-3-O-gallate treatment.

In terms of biological role, myosin regulatory subunit that plays an important role in regulation of both smooth muscle and nonmuscle cell contractile activity via its phosphorylation. Phosphorylation triggers actin polymerization in vascular smooth muscle. Implicated in cytokinesis, receptor capping, and cell locomotion. The chain is Myosin regulatory light chain 12B (MYL12B) from Bos taurus (Bovine).